Here is a 209-residue protein sequence, read N- to C-terminus: Uracil phosphoribosyltransferase (209 aa).

5-phospho-alpha-D-ribose 1-diphosphate-binding positions include R79, R104, and 131-139 (DPMLATGAS). Residues I194 and 199 to 201 (GDA) contribute to the uracil site. D200 provides a ligand contact to 5-phospho-alpha-D-ribose 1-diphosphate.

This sequence belongs to the UPRTase family. Requires Mg(2+) as cofactor.

It carries out the reaction UMP + diphosphate = 5-phospho-alpha-D-ribose 1-diphosphate + uracil. It functions in the pathway pyrimidine metabolism; UMP biosynthesis via salvage pathway; UMP from uracil: step 1/1. Allosterically activated by GTP. Catalyzes the conversion of uracil and 5-phospho-alpha-D-ribose 1-diphosphate (PRPP) to UMP and diphosphate. This is Uracil phosphoribosyltransferase from Staphylococcus haemolyticus (strain JCSC1435).